A 129-amino-acid polypeptide reads, in one-letter code: Fluoride-specific ion channel FluC 2 (129 aa).

Transmembrane regions (helical) follow at residues 4-24 (LDVMWVCLGGGVGSLGRWWIG), 39-59 (TFLINISGAFVIGYLSVLFGV), 65-85 (YGTMLNAGVLTGILGGYTTFS), and 104-124 (VFYLVASVLSGLFAAWLGAML). Positions 79 and 82 each coordinate Na(+).

Belongs to the fluoride channel Fluc/FEX (TC 1.A.43) family.

It localises to the cell inner membrane. It catalyses the reaction fluoride(in) = fluoride(out). Its activity is regulated as follows. Na(+) is not transported, but it plays an essential structural role and its presence is essential for fluoride channel function. In terms of biological role, fluoride-specific ion channel. Important for reducing fluoride concentration in the cell, thus reducing its toxicity. The polypeptide is Fluoride-specific ion channel FluC 2 (Brucella abortus biovar 1 (strain 9-941)).